We begin with the raw amino-acid sequence, 184 residues long: MKNVTDSFVSLGHWPSAGSFGFNTDILATNLINLSVVLGVLIFFGKGVLSDLLDNRKQRILNTIRNSEELREGAIEQLEKARARLRKVEIEADQFRVNGYSEIEREKLNLIDSTYKTLEQLENYKNETINFEQQKASNQVRQRVFQQALQGALGTLNSCLNSELHLRTISANIGILGAMKEITD.

A helical membrane pass occupies residues 27–49 (LATNLINLSVVLGVLIFFGKGVL).

The protein belongs to the ATPase B chain family. As to quaternary structure, F-type ATPases have 2 components, F(1) - the catalytic core - and F(0) - the membrane proton channel. F(1) has five subunits: alpha(3), beta(3), gamma(1), delta(1), epsilon(1). F(0) has four main subunits: a(1), b(1), b'(1) and c(10-14). The alpha and beta chains form an alternating ring which encloses part of the gamma chain. F(1) is attached to F(0) by a central stalk formed by the gamma and epsilon chains, while a peripheral stalk is formed by the delta, b and b' chains.

The protein resides in the plastid. The protein localises to the chloroplast thylakoid membrane. F(1)F(0) ATP synthase produces ATP from ADP in the presence of a proton or sodium gradient. F-type ATPases consist of two structural domains, F(1) containing the extramembraneous catalytic core and F(0) containing the membrane proton channel, linked together by a central stalk and a peripheral stalk. During catalysis, ATP synthesis in the catalytic domain of F(1) is coupled via a rotary mechanism of the central stalk subunits to proton translocation. Functionally, component of the F(0) channel, it forms part of the peripheral stalk, linking F(1) to F(0). The polypeptide is ATP synthase subunit b, chloroplastic (Lactuca sativa (Garden lettuce)).